A 759-amino-acid polypeptide reads, in one-letter code: Holliday junction resolvase YEN1 (759 aa).

Disordered stretches follow at residues 62–83 (RSRS…SQEY), 498–518 (SQSP…TRRQ), and 683–702 (KSRT…KSRS). A compositionally biased stretch (low complexity) spans 500–512 (SPLKRSNSPSRSK). Phosphoserine is present on residues S730 and S731.

Belongs to the XPG/RAD2 endonuclease family. GEN subfamily.

Its subcellular location is the cytoplasm. The protein localises to the nucleus. Its function is as follows. Endonuclease which resolves Holliday junctions by the introduction of symmetrically related cuts across the junction point, to produce nicked duplex products in which the nicks can be readily ligated. Four-way DNA intermediates, also known as Holliday junctions, are formed during homologous recombination and DNA repair, and their resolution is necessary for proper chromosome segregation. Involved in DNA-damage repair in vegetative cells. The protein is Holliday junction resolvase YEN1 (YEN1) of Saccharomyces cerevisiae (strain ATCC 204508 / S288c) (Baker's yeast).